The primary structure comprises 59 residues: Large ribosomal subunit protein bL32 (59 aa).

Belongs to the bacterial ribosomal protein bL32 family. Part of the 50S ribosomal subunit.

The chain is Large ribosomal subunit protein bL32 (rpmF) from Bacillus subtilis (strain 168).